Here is a 112-residue protein sequence, read N- to C-terminus: S-adenosylmethionine decarboxylase proenzyme (112 aa).

Ser-62 acts as the Schiff-base intermediate with substrate; via pyruvic acid in catalysis. The residue at position 62 (Ser-62) is a Pyruvic acid (Ser); by autocatalysis. Catalysis depends on His-67, which acts as the Proton acceptor; for processing activity. Cys-82 functions as the Proton donor; for catalytic activity in the catalytic mechanism.

This sequence belongs to the prokaryotic AdoMetDC family. Type 1 subfamily. As to quaternary structure, heterotetramer of two alpha and two beta chains arranged as a dimer of alpha/beta heterodimers. Pyruvate serves as cofactor. In terms of processing, is synthesized initially as an inactive proenzyme. Formation of the active enzyme involves a self-maturation process in which the active site pyruvoyl group is generated from an internal serine residue via an autocatalytic post-translational modification. Two non-identical subunits are generated from the proenzyme in this reaction, and the pyruvate is formed at the N-terminus of the alpha chain, which is derived from the carboxyl end of the proenzyme. The post-translation cleavage follows an unusual pathway, termed non-hydrolytic serinolysis, in which the side chain hydroxyl group of the serine supplies its oxygen atom to form the C-terminus of the beta chain, while the remainder of the serine residue undergoes an oxidative deamination to produce ammonia and the pyruvoyl group blocking the N-terminus of the alpha chain.

The enzyme catalyses S-adenosyl-L-methionine + H(+) = S-adenosyl 3-(methylsulfanyl)propylamine + CO2. It functions in the pathway amine and polyamine biosynthesis; S-adenosylmethioninamine biosynthesis; S-adenosylmethioninamine from S-adenosyl-L-methionine: step 1/1. In terms of biological role, catalyzes the decarboxylation of S-adenosylmethionine to S-adenosylmethioninamine (dcAdoMet), the propylamine donor required for the synthesis of the polyamines spermine and spermidine from the diamine putrescine. This chain is S-adenosylmethionine decarboxylase proenzyme, found in Archaeoglobus fulgidus (strain ATCC 49558 / DSM 4304 / JCM 9628 / NBRC 100126 / VC-16).